The chain runs to 121 residues: Small ribosomal subunit protein uS13 (121 aa).

Residues 95–121 (GLPVRGQKTKTNARTRKGKRKTVGAKS) form a disordered region.

The protein belongs to the universal ribosomal protein uS13 family. Part of the 30S ribosomal subunit. Forms a loose heterodimer with protein S19. Forms two bridges to the 50S subunit in the 70S ribosome.

In terms of biological role, located at the top of the head of the 30S subunit, it contacts several helices of the 16S rRNA. In the 70S ribosome it contacts the 23S rRNA (bridge B1a) and protein L5 of the 50S subunit (bridge B1b), connecting the 2 subunits; these bridges are implicated in subunit movement. Contacts the tRNAs in the A and P-sites. This is Small ribosomal subunit protein uS13 from Campylobacter jejuni subsp. jejuni serotype O:23/36 (strain 81-176).